The sequence spans 1172 residues: Phytochrome B (1172 aa).

Residues 1-16 (MVSGVGGSGGGRGGGR) are compositionally biased toward gly residues. Residues 1 to 54 (MVSGVGGSGGGRGGGRGGEEEPSSSHTPNNRRGGEQAQSSGTKSLRPRSNTESM) form a disordered region. Residues 24 to 54 (SSHTPNNRRGGEQAQSSGTKSLRPRSNTESM) are compositionally biased toward polar residues. The GAF domain maps to 252-433 (DIKLLCDTVV…AFGLQLNMEL (182 aa)). Position 357 (C357) interacts with phytochromobilin. PAS domains lie at 652-723 (VARE…LRGD) and 786-857 (DYKA…MIVL). Residues 934–1153 (YICQVIKNPL…LIILELPVPR (220 aa)) form the Histidine kinase domain.

Belongs to the phytochrome family. Homodimer. Interacts with ADO1 and PKS4. Stabilized by interactions with PAPP5 and FYPP3 which are enhanced in the phosphorylated Pfr form. Interacts with VOZ1 and VOZ2. Binds, via its photosensory domain, to PTAC12/HMR/PAP5 when photoactivated; this interaction stimulates its localization to photobodies. Interacts with CRY1 specifically when in the dark/far-red (Pr) state, but not when red light-activated (Pfr). Interacts with PIF4 and PIF5 in response to low blue light (LBL). Component of a red light-dependent nuclear complex made of PHL, PHYB and CO. Interacts directly with PHL. Binds to UNE10/PIF8 when red light-activated (Pfr). When light-activated, interacts with PCH1 and PCHL. Associated with DRT111/RSN2/SFPS, SMP2 and SWAP1 in nuclear photobodies upon response to red light (Pfr form). Contains one covalently linked phytochromobilin chromophore. In terms of tissue distribution, expressed in fruits, flowers, leaves, stems, seedlings and roots.

It localises to the cytoplasm. The protein localises to the nucleus. Its subcellular location is the nucleoplasm. It is found in the nucleus speckle. Its function is as follows. Regulatory photoreceptor which exists in two forms that are reversibly interconvertible by light: the Pr form that absorbs maximally in the red region of the spectrum and the Pfr form that absorbs maximally in the far-red region. Photoconversion of Pr to Pfr induces an array of morphogenetic responses, whereas reconversion of Pfr to Pr cancels the induction of those responses. Pfr controls the expression of a number of nuclear genes including those encoding the small subunit of ribulose-bisphosphate carboxylase, chlorophyll A/B binding protein, protochlorophyllide reductase, rRNA, etc. It also controls the expression of its own gene(s) in a negative feedback fashion. Involved in the flowering time regulation. Involved in light-regulated circadian phase control that triggers stomatal aperture, stomatal conductance, and CO(2) assimilation. Implicated in red light perception, and, to a lower extent, in blue light signaling. Controls thermomorphogenesis in the daytime and regulates temperature responses by associating with the promoters of key target genes in a temperature-dependent manner and subsequently repressing their expression in a PIF4-dependent manner (temperature-responsive transcriptional regulator); this process requires PTAC12/HMR/PAP5 (transcriptional activator). Thermal timer that integrates temperature information over the course of the night. Detabilizes UNE10/PIF8 in red light. This chain is Phytochrome B, found in Arabidopsis thaliana (Mouse-ear cress).